The chain runs to 1871 residues: MNQPNRGQILQTVFSHFFPVASPDSELVPSSLHEDITPILRVAKDVEDTNPRSLFLQDLDIKSVDDSINILSGHSHALDKANELDPTSSGRDVRQFKNTILQWLEKNNESTLKARQKSSDAHEMQSFYQQYGDEGINDLLNAGAGSSSSQRTKIYQTAVVLYDVLDAVHRKANIKVAAKILESHAEVEAKNKIYVPYNILPLDPDSKNHAMMRDPKIVAVLKAIRYTSDLTWQIGHKINDDEDVLDWLKTMFRFQKDNVSNQREHLILLLANVQMRQTQRQPNLLDDRALDTVMEKLLGNYNKWCNHVGLESSLRFPKDKQQKVVQQRKLLYTGLYLLIWGEAANLRFMPECLCYIYHHMAFELFEMLESKGSKKKYKPKNPTYSGKDEDFLTKVVTPVYKTIAEEAKKSGEGKHSEWRNYDDLNEYFWSKQYLDKLGWPMKANADFFCKTSQQLGLNKSEKKPDLGDGCVGKVNFVEIRTFWHLFRSFDRMWSFYILSLQAMIIIAWNETSESGGAVFHKVLSVFITAAKLNLFQAFLDIALSWKARHSMSTHVRQRYIFKAVAAAVWVLLMPLTYAYSHTSIFIVAILIYLSPNMLPEMLLLIPSIRRTLEKSDFRPVKLIMWWSQPELYIGRGMHESAWSIYKYMMFWIVLLTSKLAFSYYVEQIKPLMGPTKEIMSVPMPGYWLPEFFPHVKNNRGVVITLWSPVILVYFMDTQIWYAIVSTLVGGLYGAFRHIGEIQTLGMLRSRFQSLPGAFNACLIPNENTKEKGIKLAFSRKCHKIPNTNGKEAKQFSQMWNTIINSFREEDLISNRELELLLMSCWAYPDLDFIRWPIFLLASKIPIAVDIAKKRNGKHRELKNILAEDNCMSCAVRECYASIKKLLNTLVTGNSDLMLITTVFTIIDTHIEKDTLLTELNLSVLPDLHGHFVKLTEYVLQNKDKDKIQIVNVLLKILEMVTKDILKEEIKRLHLLLTVKESAMDVPSNLEARRRLTFFSNSLFMEMPGAPKIQNMLSFSALTPYYSEDVLFSTFDLEKENDGVSILFYLQKIFPDEWKNFLERVKCGTEEELDAIDYLKEEIRLWASYRGQTLTKTVRGMMYYQKALELQAFFDLANERELMKGYKSAEASSSGSSLWAECQALADIKFTYVVACQQYSIHKRSGDQRAKDILTLMTTYPSLRVAYIDEVEQTHIYSKGTSENFYYSALVKAAPQTYSTDSSDSGHMLDQVIYQIKLPGPPIIGEGKPENQNNAIIFTRGEALQTIDMNQDYYIEEAFKMRNLLQEFLEKNGGVRYPTILGLREHIFTRSVSCLAWFMSNQEHSFVTIGQRVLANPLKVRFHYGHPDVFDRVFHLTRGGVSKASKVINLSEDIFAGFNSTLREGTVSHHEYIQVGKGRDVGLNQISMFEAKIANGSGEQTLSRDLYRLGHQFDFFRMLSCYFTTVGFYFCSMLTVLTVYVFLYGRLYLVLSGVEKELGNKPMMMEIILASQSFVQIVFLMAMPMIMEIGLERGFYDALFDFVLMQLQLASVFFTFQLGTKFHYYCKTLLHGGAEYRGTGRGFVVFHAKFAENYRFYSRSHFVKATELGILLLVYHIFGPTYIGLFTISIWFMVGTWLFAPFLFNPSGFEWHEIVEDWADWKKWIEYDNGGIGVPPEKSWESWWEKDIEHLQHSGKWGIVVEIFFALRFFIFQYGLVYQLSAFKNKYSSLWVFGASWLLILILLLTVTVLDYARRRLGTEFQLLFRIIKVSLFLAFMAIFITLMTCRLILPQDVFLCMLALIPTGWGLLLIAQSCKPLIQQPGIWSWVMTLAWVYDLVMGSLLFIPIAFMAWFPFISEFQTRMLFNQAFSRGLHISRILSGQRKHRSSKNKD.

At 1–491 the chain is on the cytoplasmic side; it reads MNQPNRGQIL…FWHLFRSFDR (491 aa). The chain crosses the membrane as a helical span at residues 492 to 512; it reads MWSFYILSLQAMIIIAWNETS. At 513–521 the chain is on the extracellular side; it reads ESGGAVFHK. A helical transmembrane segment spans residues 522–542; it reads VLSVFITAAKLNLFQAFLDIA. Over 543 to 558 the chain is Cytoplasmic; that stretch reads LSWKARHSMSTHVRQR. Residues 559–579 traverse the membrane as a helical segment; it reads YIFKAVAAAVWVLLMPLTYAY. Residues 580 to 583 lie on the Extracellular side of the membrane; the sequence is SHTS. Residues 584–604 form a helical membrane-spanning segment; sequence IFIVAILIYLSPNMLPEMLLL. The Cytoplasmic portion of the chain corresponds to 605 to 640; that stretch reads IPSIRRTLEKSDFRPVKLIMWWSQPELYIGRGMHES. A helical membrane pass occupies residues 641 to 661; the sequence is AWSIYKYMMFWIVLLTSKLAF. The Extracellular portion of the chain corresponds to 662-701; the sequence is SYYVEQIKPLMGPTKEIMSVPMPGYWLPEFFPHVKNNRGV. The helical transmembrane segment at 702-724 threads the bilayer; that stretch reads VITLWSPVILVYFMDTQIWYAIV. Over 725–1441 the chain is Cytoplasmic; it reads STLVGGLYGA…FDFFRMLSCY (717 aa). A helical transmembrane segment spans residues 1442 to 1462; it reads FTTVGFYFCSMLTVLTVYVFL. At 1463–1485 the chain is on the extracellular side; sequence YGRLYLVLSGVEKELGNKPMMME. A helical transmembrane segment spans residues 1486-1506; that stretch reads IILASQSFVQIVFLMAMPMIM. Residues 1507–1516 lie on the Cytoplasmic side of the membrane; the sequence is EIGLERGFYD. The helical transmembrane segment at 1517–1537 threads the bilayer; sequence ALFDFVLMQLQLASVFFTFQL. Topologically, residues 1538–1580 are extracellular; the sequence is GTKFHYYCKTLLHGGAEYRGTGRGFVVFHAKFAENYRFYSRSH. 2 consecutive transmembrane segments (helical) span residues 1581–1601 and 1602–1622; these read FVKA…GPTY and IGLF…APFL. At 1623-1675 the chain is on the extracellular side; that stretch reads FNPSGFEWHEIVEDWADWKKWIEYDNGGIGVPPEKSWESWWEKDIEHLQHSGK. A helical membrane pass occupies residues 1676-1696; that stretch reads WGIVVEIFFALRFFIFQYGLV. Residues 1697 to 1708 are Cytoplasmic-facing; it reads YQLSAFKNKYSS. Residues 1709–1729 traverse the membrane as a helical segment; that stretch reads LWVFGASWLLILILLLTVTVL. Topologically, residues 1730–1741 are extracellular; that stretch reads DYARRRLGTEFQ. The helical transmembrane segment at 1742–1762 threads the bilayer; that stretch reads LLFRIIKVSLFLAFMAIFITL. The Cytoplasmic portion of the chain corresponds to 1763–1772; it reads MTCRLILPQD. A helical membrane pass occupies residues 1773–1793; sequence VFLCMLALIPTGWGLLLIAQS. The Extracellular portion of the chain corresponds to 1794 to 1815; the sequence is CKPLIQQPGIWSWVMTLAWVYD. Residues 1816-1836 traverse the membrane as a helical segment; it reads LVMGSLLFIPIAFMAWFPFIS. Over 1837–1871 the chain is Cytoplasmic; that stretch reads EFQTRMLFNQAFSRGLHISRILSGQRKHRSSKNKD.

It belongs to the glycosyltransferase 48 family.

Its subcellular location is the cell membrane. The enzyme catalyses [(1-&gt;3)-beta-D-glucosyl](n) + UDP-alpha-D-glucose = [(1-&gt;3)-beta-D-glucosyl](n+1) + UDP + H(+). Involved in callose synthesis at the forming cell plate during cytokinesis. During plant growth and development, callose is found as a transitory component of the cell plate in dividing cells, is a major component of pollen mother cell walls and pollen tubes, and is found as a structural component of plasmodesmatal canals. This is Callose synthase 4 (CALS4) from Arabidopsis thaliana (Mouse-ear cress).